The sequence spans 334 residues: Aspartate carbamoyltransferase catalytic subunit (334 aa).

R71 and T72 together coordinate carbamoyl phosphate. K99 contacts L-aspartate. R121, H151, and Q154 together coordinate carbamoyl phosphate. L-aspartate is bound by residues R184 and R239. Positions 280 and 281 each coordinate carbamoyl phosphate.

This sequence belongs to the aspartate/ornithine carbamoyltransferase superfamily. ATCase family. As to quaternary structure, heterododecamer (2C3:3R2) of six catalytic PyrB chains organized as two trimers (C3), and six regulatory PyrI chains organized as three dimers (R2).

It carries out the reaction carbamoyl phosphate + L-aspartate = N-carbamoyl-L-aspartate + phosphate + H(+). It participates in pyrimidine metabolism; UMP biosynthesis via de novo pathway; (S)-dihydroorotate from bicarbonate: step 2/3. Its function is as follows. Catalyzes the condensation of carbamoyl phosphate and aspartate to form carbamoyl aspartate and inorganic phosphate, the committed step in the de novo pyrimidine nucleotide biosynthesis pathway. This is Aspartate carbamoyltransferase catalytic subunit from Pseudomonas entomophila (strain L48).